The following is a 205-amino-acid chain: Recombination protein RecR (205 aa).

The C4-type zinc-finger motif lies at 59–74 (CARCNTFCEGGLCDIC). The Toprim domain occupies 82–177 (RRLMVVHMPA…KVSRLSQGIP (96 aa)).

This sequence belongs to the RecR family.

May play a role in DNA repair. It seems to be involved in an RecBC-independent recombinational process of DNA repair. It may act with RecF and RecO. This chain is Recombination protein RecR, found in Neisseria gonorrhoeae (strain ATCC 700825 / FA 1090).